The chain runs to 871 residues: Alanine--tRNA ligase (871 aa).

Zn(2+) is bound by residues His-561, His-565, Cys-662, and His-666.

The protein belongs to the class-II aminoacyl-tRNA synthetase family. Requires Zn(2+) as cofactor.

The protein resides in the cytoplasm. The catalysed reaction is tRNA(Ala) + L-alanine + ATP = L-alanyl-tRNA(Ala) + AMP + diphosphate. Functionally, catalyzes the attachment of alanine to tRNA(Ala) in a two-step reaction: alanine is first activated by ATP to form Ala-AMP and then transferred to the acceptor end of tRNA(Ala). Also edits incorrectly charged Ser-tRNA(Ala) and Gly-tRNA(Ala) via its editing domain. The protein is Alanine--tRNA ligase of Dechloromonas aromatica (strain RCB).